The following is a 320-amino-acid chain: MRKKKNLKIGIVMDSITLINIKKDSSFAILLEAQKRQHEIYYMEMNDLYLRKGQSYATTKSIEIQKNQNNYFKFIQKKDISLNELDAILMRKDPPFNTEFIYATYILERAEEKGVLVINKPKSLRDCNEKIFISWFSRFTTDTLVTRKLSKIHNFWKEKNDIILKPLDAMGGKGVFRIKKDDPNFSVIVETLTNYEKKYCMIQTYLPEVQFGDKRILIVNGKPIPWSLTRIPKHGETRANLAVGGEGRVQKLNDKDWEIANYLAPILKKRGLILVGLDVIGDKLTEINVTSPTCICEIEEKKNISITGILIDYIEDKIYK.

The ATP-grasp domain maps to 130–315; sequence KIFISWFSRF…ITGILIDYIE (186 aa). An ATP-binding site is contributed by 156 to 212; sequence WKEKNDIILKPLDAMGGKGVFRIKKDDPNFSVIVETLTNYEKKYCMIQTYLPEVQFG. Positions 286 and 288 each coordinate Mg(2+).

Belongs to the prokaryotic GSH synthase family. Mg(2+) serves as cofactor. Requires Mn(2+) as cofactor.

It catalyses the reaction gamma-L-glutamyl-L-cysteine + glycine + ATP = glutathione + ADP + phosphate + H(+). The protein operates within sulfur metabolism; glutathione biosynthesis; glutathione from L-cysteine and L-glutamate: step 2/2. This chain is Glutathione synthetase, found in Buchnera aphidicola subsp. Schizaphis graminum (strain Sg).